A 435-amino-acid polypeptide reads, in one-letter code: MLLPWATSAPGLAWGPLVLGLFGLLAASQPQAVPPYASENQTCRDQEKEYYEPQHRICCSRCPPGTYVSAKCSRIRDTVCATCAENSYNEHWNYLTICQLCRPCDPVMGLEEIAPCTSKRKTQCRCQPGMFCAAWALECTHCELLSDCPPGTEAELKDEVGKGNNHCVPCKAGHFQNTSSPSARCQPHTRCENQGLVEAAPGTAQSDTTCKNPLEPLPPEMSGTMLMLAVLLPLAFFLLLATVFSCIWKSHPSLCRKLGSLLKRRPQGEGPNPVAGSWEPPKAHPYFPDLVQPLLPISGDVSPVSTGLPAAPVLEAGVPQQQSPLDLTREPQLEPGEQSQVAHGTNGIHVTGGSMTITGNIYIYNGPVLGGPPGPGDLPATPEPPYPIPEEGDPGPPGLSTPHQEDGKAWHLAETEHCGATPSNRGPRNQFITHD.

An N-terminal signal peptide occupies residues 1 to 30 (MLLPWATSAPGLAWGPLVLGLFGLLAASQP). The Extracellular portion of the chain corresponds to 31–227 (QAVPPYASEN…PPEMSGTMLM (197 aa)). An N-linked (GlcNAc...) asparagine glycan is attached at Asn40. 4 TNFR-Cys repeats span residues 42–81 (TCRD…TVCA), 82–124 (TCAE…KTQC), 125–168 (RCQP…NHCV), and 169–211 (PCKA…TTCK). 10 disulfides stabilise this stretch: Cys43/Cys58, Cys59/Cys72, Cys62/Cys80, Cys83/Cys98, Cys101/Cys116, Cys104/Cys124, Cys126/Cys132, Cys139/Cys148, Cys142/Cys167, and Cys170/Cys185. Asn177 carries an N-linked (GlcNAc...) asparagine glycan. A helical membrane pass occupies residues 228 to 248 (LAVLLPLAFFLLLATVFSCIW). At 249 to 435 (KSHPSLCRKL…GPRNQFITHD (187 aa)) the chain is on the cytoplasmic side. Phosphoserine is present on Ser323. Pro residues predominate over residues 373–399 (PGPGDLPATPEPPYPIPEEGDPGPPGL). The interval 373–435 (PGPGDLPATP…GPRNQFITHD (63 aa)) is disordered. The segment covering 403 to 417 (HQEDGKAWHLAETEH) has biased composition (basic and acidic residues). Over residues 421 to 435 (TPSNRGPRNQFITHD) the composition is skewed to polar residues.

As to quaternary structure, self-associates; dimerization and trimerization are promoted by lymphotoxin (LTA(1)-LTB(2)). Associates with TRAF3. Associates with TRAF4. Associates with TRAF5. Interacts with Aedes aegypti lymphotoxin beta receptor inhibitor; the interaction reduces dimerization and trimerization of LTBR induced by lymphotoxin (LTA(1)-LTB(2)). In terms of assembly, (Microbial infection) Interacts with HCV core protein.

The protein resides in the membrane. Receptor for the heterotrimeric lymphotoxin containing LTA and LTB, and for TNFS14/LIGHT. Activates NF-kappa-B signaling pathway upon stimulation with lymphotoxin (LTA(1)-LTB(2)). Promotes apoptosis via TRAF3 and TRAF5. May play a role in the development of lymphoid organs. The sequence is that of Tumor necrosis factor receptor superfamily member 3 (LTBR) from Homo sapiens (Human).